We begin with the raw amino-acid sequence, 365 residues long: HVDHGKTTLTAAITTVLAKKYGGSARAFDQIDNAPEEKARGITINTSHVEYDTSLRHYAHVDCPGHADYIKNMITGAAQMDGAILVVAATDGPMPQTREHILLGRQVGVPYIVVFLNKCDMVDDEELLELVEMEVRDLLTQYDFPGDKTPIIRGSALKALEGDCIWESKIIDLANILDTYIPEPKRSIDQPFLLPIEDVFSISGRGTVVTGRVERGIIKVGEEVEIVGIKPTSKTICTGVEMFRKLLDEGRAGENVGVLLRGTKRDDIERGQVLSKPGTITPHIKFESEVYVLSKEEGGRHTPFFKGYRPQFYFRTTDVTGYVELPEGIEMVMPGDNVKMVVTLIHPIAMSDGLRFAIREGGRTV.

Residues 1–7, 62–66, and 117–120 each bind GTP; these read HVDHGKT, DCPGH, and NKCD. Residues 1–185 form the tr-type G domain; that stretch reads HVDHGKTTLT…ILDTYIPEPK (185 aa). T7 contacts Mg(2+).

This sequence belongs to the TRAFAC class translation factor GTPase superfamily. Classic translation factor GTPase family. EF-Tu/EF-1A subfamily. As to quaternary structure, monomer.

It localises to the cytoplasm. It carries out the reaction GTP + H2O = GDP + phosphate + H(+). Its function is as follows. GTP hydrolase that promotes the GTP-dependent binding of aminoacyl-tRNA to the A-site of ribosomes during protein biosynthesis. The polypeptide is Elongation factor Tu (Buchnera aphidicola subsp. Melaphis rhois).